The chain runs to 382 residues: Small ribosomal subunit protein mS35 (382 aa).

The span at 363–375 (GRGGKALPGGKGG) shows a compositional bias: gly residues. The disordered stretch occupies residues 363 to 382 (GRGGKALPGGKGGKMQRSKR).

This sequence belongs to the mitochondrion-specific ribosomal protein mS35 family. Component of the mitochondrial small ribosomal subunit (mt-SSU). Mature N.crassa 74S mitochondrial ribosomes consist of a small (37S) and a large (54S) subunit. The 37S small subunit contains a 16S ribosomal RNA (16S mt-rRNA) and 32 different proteins. The 54S large subunit contains a 23S rRNA (23S mt-rRNA) and 42 different proteins.

It is found in the mitochondrion. Its function is as follows. Component of the mitochondrial ribosome (mitoribosome), a dedicated translation machinery responsible for the synthesis of mitochondrial genome-encoded proteins, including at least some of the essential transmembrane subunits of the mitochondrial respiratory chain. The mitoribosomes are attached to the mitochondrial inner membrane and translation products are cotranslationally integrated into the membrane. The chain is Small ribosomal subunit protein mS35 (rsm24) from Neurospora crassa (strain ATCC 24698 / 74-OR23-1A / CBS 708.71 / DSM 1257 / FGSC 987).